Consider the following 413-residue polypeptide: MKVLIVGAGGREHALASKINQSPIVDKVYAIPGNDAMVNIAEVHSEIAESDHQAILHFAQHNAIDWVIIGPEQPLIDGLADLLRNANIKVFGPGQDAAQIEGSKLFAKQLMDKYRIPTAEYKEVSSRNEALQYVETCDLPIVIKKDGLAAGKGVIIAFTREDALDGVKKIYQEEKGKVVFESYLEGEEFSLMTFVNGDYAVPFDCIAQDHKRAFDNDQGPNTGGMGAYCPVPHIDASVLEQTNKEIAQPIAKAMAQEGHDFFGLLYIGAILTKDGPKVIEFNARFGDPEAQVLLTRLESDLMQLIIDLENCQPIHFNWKDEAVVGVMLASKGYPGSYEKGHEISGFNLDSHYYVSGLKKEGQCFVNSGGRVILAIGEGPTVEKAQANAYEHARQIKSDNLFYRNDIGNKAITK.

Positions 108 to 310 constitute an ATP-grasp domain; that stretch reads KQLMDKYRIP…LMQLIIDLEN (203 aa). Residue 134 to 190 coordinates ATP; the sequence is VETCDLPIVIKKDGLAAGKGVIIAFTREDALDGVKKIYQEEKGKVVFESYLEGEEFS. Positions 280 and 282 each coordinate Mg(2+).

It belongs to the GARS family. Requires Mg(2+) as cofactor. Mn(2+) is required as a cofactor.

The enzyme catalyses 5-phospho-beta-D-ribosylamine + glycine + ATP = N(1)-(5-phospho-beta-D-ribosyl)glycinamide + ADP + phosphate + H(+). It participates in purine metabolism; IMP biosynthesis via de novo pathway; N(1)-(5-phospho-D-ribosyl)glycinamide from 5-phospho-alpha-D-ribose 1-diphosphate: step 2/2. The protein is Phosphoribosylamine--glycine ligase of Staphylococcus epidermidis (strain ATCC 12228 / FDA PCI 1200).